A 232-amino-acid chain; its full sequence is Nucleolar protein 16 (232 aa).

The span at 1–14 (MGRELQKRKKRSSR) shows a compositional bias: basic residues. Disordered stretches follow at residues 1–20 (MGRE…VQTH) and 113–161 (RSDN…QSSR). Residues 132 to 154 (EEPKPKNPTHDIEWHGISDDRQE) show a composition bias toward basic and acidic residues.

This sequence belongs to the NOP16 family. Component of the pre-66S ribosomal particle.

It is found in the nucleus. It localises to the nucleolus. Involved in the biogenesis of the 60S ribosomal subunit. The sequence is that of Nucleolar protein 16 (nop-16) from Neurospora crassa (strain ATCC 24698 / 74-OR23-1A / CBS 708.71 / DSM 1257 / FGSC 987).